Here is a 117-residue protein sequence, read N- to C-terminus: MNEKIRNFESNQMKKDIPPLHPGDVVEISLWIIEGNKKRFQIFEGMIIAIKNRGLNSAFTVRKISSGEGVERVFQIHSPVIKEINIKKIGVVRRAKLYYLRNLKGKSARIKTRLHVN.

It belongs to the bacterial ribosomal protein bL19 family.

This protein is located at the 30S-50S ribosomal subunit interface and may play a role in the structure and function of the aminoacyl-tRNA binding site. The polypeptide is Large ribosomal subunit protein bL19 (Blochmanniella floridana).